Here is a 106-residue protein sequence, read N- to C-terminus: MADSGCWRPPRDCDDYWSEWKHCKSLRNRFHNYYTYGKAPECQEWKRDYMTCRDWEKTKSNNLKEALQQSEKTRLEGKQNNSPVWTLRKNPPPDWYLPLDPGKPRQ.

The disordered stretch occupies residues 67 to 106 (LQQSEKTRLEGKQNNSPVWTLRKNPPPDWYLPLDPGKPRQ).

The protein belongs to the UPF0545 family. Rapidly degraded by proteolysis following neuronal stimulation, resulting in increased AMPA receptor clustering.

The protein resides in the synapse. Its subcellular location is the synaptic cleft. In terms of biological role, negatively regulates long-term potentiation and modulates adult synaptic plasticity. The chain is Synaptic plasticity regulator PANTS from Xenopus laevis (African clawed frog).